A 123-amino-acid chain; its full sequence is Small ribosomal subunit protein uS12 (123 aa).

Residues 1–21 form a disordered region; the sequence is MPTIEQLVRKGRQAKPKKSKT. The segment covering 9–20 has biased composition (basic residues); it reads RKGRQAKPKKSK. Asp89 is modified (3-methylthioaspartic acid).

This sequence belongs to the universal ribosomal protein uS12 family. As to quaternary structure, part of the 30S ribosomal subunit. Contacts proteins S8 and S17. May interact with IF1 in the 30S initiation complex.

Functionally, with S4 and S5 plays an important role in translational accuracy. Its function is as follows. Interacts with and stabilizes bases of the 16S rRNA that are involved in tRNA selection in the A site and with the mRNA backbone. Located at the interface of the 30S and 50S subunits, it traverses the body of the 30S subunit contacting proteins on the other side and probably holding the rRNA structure together. The combined cluster of proteins S8, S12 and S17 appears to hold together the shoulder and platform of the 30S subunit. This Bifidobacterium longum subsp. infantis (strain ATCC 15697 / DSM 20088 / JCM 1222 / NCTC 11817 / S12) protein is Small ribosomal subunit protein uS12.